A 199-amino-acid chain; its full sequence is Adult-specific cuticular protein ACP-22 (199 aa).

Residues 1–19 (MRLFIILSVASFGAIGVLS) form the signal peptide. The segment at 63–103 (GGGGGGGGEGEEGREHELRGGGLELGGGGGGGGGGGGGGGE) is disordered. Residues 82 to 102 (GGGLELGGGGGGGGGGGGGGG) are compositionally biased toward gly residues. Positions 133–199 (HPEYHSDYHV…IARVSYRKHH (67 aa)) constitute a Chitin-binding type R&amp;R domain.

Epidermal regions synthesizing hard cuticle.

Cuticular proteins play a significant role in determining the physical properties of cuticles. The sequence is that of Adult-specific cuticular protein ACP-22 (ACP22) from Tenebrio molitor (Yellow mealworm beetle).